Consider the following 244-residue polypeptide: Ribosomal RNA large subunit methyltransferase E (244 aa).

The interval 1 to 23 is disordered; sequence MATGGKKSAGRTTGSGPAGGSRN. S-adenosyl-L-methionine-binding residues include glycine 91, tryptophan 93, aspartate 116, aspartate 132, and aspartate 156. The active-site Proton acceptor is the lysine 196.

This sequence belongs to the class I-like SAM-binding methyltransferase superfamily. RNA methyltransferase RlmE family.

It localises to the cytoplasm. The enzyme catalyses uridine(2552) in 23S rRNA + S-adenosyl-L-methionine = 2'-O-methyluridine(2552) in 23S rRNA + S-adenosyl-L-homocysteine + H(+). Functionally, specifically methylates the uridine in position 2552 of 23S rRNA at the 2'-O position of the ribose in the fully assembled 50S ribosomal subunit. This Paramagnetospirillum magneticum (strain ATCC 700264 / AMB-1) (Magnetospirillum magneticum) protein is Ribosomal RNA large subunit methyltransferase E.